We begin with the raw amino-acid sequence, 743 residues long: MASNYYSVQIKQCIGLGARNQSRYVKMIHGNIIRALPYPETFLYNNIVHAYALMKSSTYARRVFDRIPQPNLFSWNNLLLAYSKAGLISEMESTFEKLPDRDGVTWNVLIEGYSLSGLVGAAVKAYNTMMRDFSANLTRVTLMTMLKLSSSNGHVSLGKQIHGQVIKLGFESYLLVGSPLLYMYANVGCISDAKKVFYGLDDRNTVMYNSLMGGLLACGMIEDALQLFRGMEKDSVSWAAMIKGLAQNGLAKEAIECFREMKVQGLKMDQYPFGSVLPACGGLGAINEGKQIHACIIRTNFQDHIYVGSALIDMYCKCKCLHYAKTVFDRMKQKNVVSWTAMVVGYGQTGRAEEAVKIFLDMQRSGIDPDHYTLGQAISACANVSSLEEGSQFHGKAITSGLIHYVTVSNSLVTLYGKCGDIDDSTRLFNEMNVRDAVSWTAMVSAYAQFGRAVETIQLFDKMVQHGLKPDGVTLTGVISACSRAGLVEKGQRYFKLMTSEYGIVPSIGHYSCMIDLFSRSGRLEEAMRFINGMPFPPDAIGWTTLLSACRNKGNLEIGKWAAESLIELDPHHPAGYTLLSSIYASKGKWDSVAQLRRGMREKNVKKEPGQSWIKWKGKLHSFSADDESSPYLDQIYAKLEELNNKIIDNGYKPDTSFVHHDVEEAVKVKMLNYHSERLAIAFGLIFVPSGQPIRVGKNLRVCVDCHNATKHISSVTGREILVRDAVRFHRFKDGTCSCGDFW.

PPR repeat units follow at residues 40-70 (ETFL…IPQP), 71-101 (NLFS…LPDR), 102-132 (DGVT…MMRD), 138-172 (TRVT…GFES), 173-203 (YLLV…LDDR), 204-233 (NTVM…GMEK), 234-268 (DSVS…GLKM), 269-303 (DQYP…NFQD), 304-334 (HIYV…MKQK), 335-369 (NVVS…GIDP), 370-404 (DHYT…GLIH), 405-435 (YVTV…MNVR), 436-470 (DAVS…GLKP), 471-506 (DGVT…GIVP), and 507-537 (SIGH…MPFP). The type E motif stretch occupies residues 542–617 (GWTTLLSACR…EPGQSWIKWK (76 aa)). The interval 618–648 (GKLHSFSADDESSPYLDQIYAKLEELNNKII) is type E(+) motif. A type DYW motif region spans residues 649 to 743 (DNGYKPDTSF…DGTCSCGDFW (95 aa)).

The protein belongs to the PPR family. PCMP-H subfamily.

The protein is Putative pentatricopeptide repeat-containing protein At1g68930 (PCMP-H22) of Arabidopsis thaliana (Mouse-ear cress).